Reading from the N-terminus, the 524-residue chain is Nucleobase-ascorbate transporter 2 (524 aa).

A run of 12 helical transmembrane segments spans residues 41–61 (YILA…MMGG), 69–89 (VVQT…LFGT), 91–111 (LPTV…IIHD), 133–153 (GAII…MWAI), 155–175 (SRFF…FGLF), 179–199 (FPVV…FVIF), 217–237 (FALI…TASG), 282–302 (AFAM…AFKA), 359–379 (RVIQ…KFGA), 380–400 (LFAS…FGLV), 419–439 (LFIV…FRDF), and 457–477 (DFLN…AVFL).

The protein belongs to the nucleobase:cation symporter-2 (NCS2) (TC 2.A.40) family. In terms of tissue distribution, expressed in cotyledons 10 days after imbibition (DAI). Expressed in the minor and major veins of cotyledons and leaves, in the shoot apex and pedicels. Expressed in the root meristems, root tips and lateral root primordia.

Its subcellular location is the membrane. This chain is Nucleobase-ascorbate transporter 2 (NAT2), found in Arabidopsis thaliana (Mouse-ear cress).